A 1744-amino-acid polypeptide reads, in one-letter code: Probable disease resistance protein At4g19520 (1744 aa).

Residues 3–163 (DGKEVYISFN…KIVADVRQKL (161 aa)) enclose the TIR 1 domain. Glutamate 80 is an active-site residue. The NB-ARC domain occupies 192–411 (SLGIWGMAGI…VSEKEIFLDI (220 aa)). LRR repeat units follow at residues 503–526 (YEDVKAINLDTSNLPFKGHIAFQH), 557–581 (PPELRLLHWTCYPLHSFPQNFGFQY), 583–602 (VELNMPCSKLKKLWGGTKNL), 603–626 (EVLKRITLSCSVQLLNVDELQYSP), 648–669 (LQHLRIVDLSTCKKIKSFPKVP), 670–692 (PSIRKLHLQGTGIRDLSSLNHSS), 710–733 (DHRKQVLKLKDSSHLGSLPDIVIF), 734–754 (ESLEVLDFSGCSELEDIQGFP), 755–777 (QNLKRLYLAKTAIKEVPSSLCHH), 779–802 (SKLVKLDMENCERLRDLPMGMSNM), 804–823 (YLAVLKLSGCSNLENIKELP), 824–846 (RNLKELYLAGTAVKEFPSTLLET), 848–871 (SEVVLLDLENCKKLQGLPTGMSKL), 892–915 (PLNLIELYLAGTAIRELPPSIGDL), 917–939 (LLDTLDLKNCNRLRHLPMEMHNL), 941–963 (PLKVLDLSNCSELEVFTSSLPKV), 987–1010 (YEHRVTLSLYKARLQYIPEEIRWM), 1011–1035 (PSLKTLDLSRNGFTEVPVSIKDFSK), 1037–1059 (LSLRLRYCENLRSLPQLPRSLQL), and 1062–1086 (AHGCSSLQLITPDFKQLPRYYTFSN). The region spanning 1399–1559 (RNNDVFVSFH…KVANDIRKKL (161 aa)) is the TIR 2 domain.

It belongs to the disease resistance TIR-NB-LRR family.

It catalyses the reaction NAD(+) + H2O = ADP-D-ribose + nicotinamide + H(+). In terms of biological role, probable disease resistance protein. This chain is Probable disease resistance protein At4g19520, found in Arabidopsis thaliana (Mouse-ear cress).